The sequence spans 216 residues: uncharacterized protein (216 aa).

2 4Fe-4S ferredoxin-type domains span residues 160 to 189 (DDKP…IDEK) and 188 to 216 (EKPK…ALLP). Cysteine 169, cysteine 172, cysteine 175, cysteine 179, cysteine 197, cysteine 200, cysteine 203, and cysteine 207 together coordinate [4Fe-4S] cluster.

Belongs to the FrhG family.

This is an uncharacterized protein from Methanocaldococcus jannaschii (strain ATCC 43067 / DSM 2661 / JAL-1 / JCM 10045 / NBRC 100440) (Methanococcus jannaschii).